Reading from the N-terminus, the 447-residue chain is Probable ribonuclease FAU-1 (447 aa).

Positions 424–447 (PEAPGGKICTPEGLTSAPPRSSSA) are disordered.

Belongs to the FAU-1 family.

Functionally, probable RNase involved in rRNA stability through maturation and/or degradation of precursor rRNAs. Binds to RNA in loop regions with AU-rich sequences. This Pyrobaculum neutrophilum (strain DSM 2338 / JCM 9278 / NBRC 100436 / V24Sta) (Thermoproteus neutrophilus) protein is Probable ribonuclease FAU-1.